A 542-amino-acid chain; its full sequence is Coiled-coil domain-containing protein 60 (542 aa).

Residues 70–97 adopt a coiled-coil conformation; sequence TMLQEETAFKKHQQHLKKLQEEELNKFQ. Disordered regions lie at residues 228-284 and 334-358; these read ATRK…EEEV and QTTHKSSERSSTTSGESHIQVTQKK. 2 stretches are compositionally biased toward low complexity: residues 245–261 and 342–351; these read SGGSSPQSSMMSVNPSS and RSSTTSGESH.

The polypeptide is Coiled-coil domain-containing protein 60 (Ccdc60) (Rattus norvegicus (Rat)).